Reading from the N-terminus, the 346-residue chain is Nicotinate-nucleotide--dimethylbenzimidazole phosphoribosyltransferase (346 aa).

The Proton acceptor role is filled by Glu-312.

This sequence belongs to the CobT family.

The enzyme catalyses 5,6-dimethylbenzimidazole + nicotinate beta-D-ribonucleotide = alpha-ribazole 5'-phosphate + nicotinate + H(+). It participates in nucleoside biosynthesis; alpha-ribazole biosynthesis; alpha-ribazole from 5,6-dimethylbenzimidazole: step 1/2. Catalyzes the synthesis of alpha-ribazole-5'-phosphate from nicotinate mononucleotide (NAMN) and 5,6-dimethylbenzimidazole (DMB). The chain is Nicotinate-nucleotide--dimethylbenzimidazole phosphoribosyltransferase from Cupriavidus taiwanensis (strain DSM 17343 / BCRC 17206 / CCUG 44338 / CIP 107171 / LMG 19424 / R1) (Ralstonia taiwanensis (strain LMG 19424)).